A 317-amino-acid chain; its full sequence is Homoserine O-succinyltransferase (317 aa).

C142 serves as the catalytic Acyl-thioester intermediate. 2 residues coordinate substrate: K163 and S192. The active-site Proton acceptor is the H235. E237 is an active-site residue. Position 249 (R249) interacts with substrate.

Belongs to the MetA family.

The protein localises to the cytoplasm. The enzyme catalyses L-homoserine + succinyl-CoA = O-succinyl-L-homoserine + CoA. The protein operates within amino-acid biosynthesis; L-methionine biosynthesis via de novo pathway; O-succinyl-L-homoserine from L-homoserine: step 1/1. Functionally, transfers a succinyl group from succinyl-CoA to L-homoserine, forming succinyl-L-homoserine. In Aeromonas hydrophila subsp. hydrophila (strain ATCC 7966 / DSM 30187 / BCRC 13018 / CCUG 14551 / JCM 1027 / KCTC 2358 / NCIMB 9240 / NCTC 8049), this protein is Homoserine O-succinyltransferase.